The following is a 242-amino-acid chain: Uridylate kinase (242 aa).

ATP is bound at residue 16–19 (KVSG). Glycine 58 is a binding site for UMP. 2 residues coordinate ATP: glycine 59 and arginine 63. Residues aspartate 78 and 139 to 146 (TGNPFCTT) each bind UMP. Positions 166, 167, 172, and 175 each coordinate ATP.

This sequence belongs to the UMP kinase family. Homohexamer.

The protein resides in the cytoplasm. The enzyme catalyses UMP + ATP = UDP + ADP. The protein operates within pyrimidine metabolism; CTP biosynthesis via de novo pathway; UDP from UMP (UMPK route): step 1/1. Inhibited by UTP. Its function is as follows. Catalyzes the reversible phosphorylation of UMP to UDP. The polypeptide is Uridylate kinase (Rickettsia canadensis (strain McKiel)).